Reading from the N-terminus, the 122-residue chain is Small ribosomal subunit protein uS13 (122 aa).

The tract at residues 92-122 (HRRGLPVRGQRTHTNARTRKGPAKPIAGKKK) is disordered.

This sequence belongs to the universal ribosomal protein uS13 family. Part of the 30S ribosomal subunit. Forms a loose heterodimer with protein S19. Forms two bridges to the 50S subunit in the 70S ribosome.

Its function is as follows. Located at the top of the head of the 30S subunit, it contacts several helices of the 16S rRNA. In the 70S ribosome it contacts the 23S rRNA (bridge B1a) and protein L5 of the 50S subunit (bridge B1b), connecting the 2 subunits; these bridges are implicated in subunit movement. Contacts the tRNAs in the A and P-sites. The polypeptide is Small ribosomal subunit protein uS13 (Paracoccus denitrificans (strain Pd 1222)).